Here is a 504-residue protein sequence, read N- to C-terminus: L-carnitine/gamma-butyrobetaine antiporter (504 aa).

Transmembrane regions (helical) follow at residues 10 to 30, 51 to 71, 92 to 112, 143 to 163, 195 to 215, 231 to 251, 263 to 283, 316 to 336, 347 to 367, 398 to 418, 446 to 466, and 475 to 495; these read IEPK…WLTV, WGWA…WLVF, IFMM…SIEI, GPLP…FFFV, FYLV…TPLV, LDAI…ACGL, SYLS…SFIM, WTVF…IFLA, LCFG…TVLG, WAAL…CFIA, LLVR…LLAL, and AIIA…LSFI.

It belongs to the BCCT transporter (TC 2.A.15) family. CaiT subfamily. In terms of assembly, homotrimer.

It is found in the cell inner membrane. The enzyme catalyses 4-(trimethylamino)butanoate(in) + (R)-carnitine(out) = 4-(trimethylamino)butanoate(out) + (R)-carnitine(in). It participates in amine and polyamine metabolism; carnitine metabolism. Its function is as follows. Catalyzes the exchange of L-carnitine for gamma-butyrobetaine. The chain is L-carnitine/gamma-butyrobetaine antiporter from Escherichia coli (strain K12 / MC4100 / BW2952).